Reading from the N-terminus, the 83-residue chain is Hainantoxin-III 4 (83 aa).

The signal sequence occupies residues 1-21 (MKASMYLALAGLVLLFVVGYA). Residues 22 to 48 (SESEEKEFPRELLSKIFAVDDFKGKER) constitute a propeptide that is removed on maturation. 3 disulfide bridges follow: C50-C65, C57-C70, and C64-C77. L81 is modified (leucine amide).

The protein belongs to the neurotoxin 10 (Hwtx-1) family. 15 (Hntx-3) subfamily. In terms of assembly, monomer. Expressed by the venom gland.

Its subcellular location is the secreted. Selective antagonist of neuronal tetrodotoxin (TTX)-sensitive voltage-gated sodium channels (IC(50)=1270 nM on Nav1.1/SCN1A, 270 nM on Nav1.2/SCN2A, 491 nM on Nav1.3/SCN3A and 232 nM on Nav1.7/SCN9A). This toxin suppress Nav1.7 current amplitude without significantly altering the activation, inactivation, and repriming kinetics. Short extreme depolarizations partially activate the toxin-bound channel, indicating voltage-dependent inhibition of this toxin. This toxin increases the deactivation of the Nav1.7 current after extreme depolarizations. The toxin-Nav1.7 complex is gradually dissociated upon prolonged strong depolarizations in a voltage-dependent manner, and the unbound toxin rebinds to Nav1.7 after a long repolarization. Moreover, analysis of chimeric channels showed that the DIIS3-S4 linker is critical for toxin binding to Nav1.7. These data are consistent with this toxin interacting with Nav1.7 site 4 and trapping the domain II voltage sensor in the closed state. In Cyriopagopus hainanus (Chinese bird spider), this protein is Hainantoxin-III 4.